A 232-amino-acid chain; its full sequence is 7-cyano-7-deazaguanine synthase (232 aa).

Phenylalanine 8–leucine 18 provides a ligand contact to ATP. Residues cysteine 187, cysteine 196, cysteine 199, and cysteine 202 each coordinate Zn(2+).

This sequence belongs to the QueC family. The cofactor is Zn(2+).

The catalysed reaction is 7-carboxy-7-deazaguanine + NH4(+) + ATP = 7-cyano-7-deazaguanine + ADP + phosphate + H2O + H(+). It participates in purine metabolism; 7-cyano-7-deazaguanine biosynthesis. In terms of biological role, catalyzes the ATP-dependent conversion of 7-carboxy-7-deazaguanine (CDG) to 7-cyano-7-deazaguanine (preQ(0)). This is 7-cyano-7-deazaguanine synthase from Shewanella denitrificans (strain OS217 / ATCC BAA-1090 / DSM 15013).